A 205-amino-acid polypeptide reads, in one-letter code: Urease accessory protein UreE (205 aa).

A compositionally biased stretch (basic and acidic residues) spans 171–192; that stretch reads HHGHSHSHDHDHDHDHDHDHQH. A disordered region spans residues 171–205; it reads HHGHSHSHDHDHDHDHDHDHQHGPCCSHGHHHGHR.

Belongs to the UreE family.

The protein resides in the cytoplasm. Involved in urease metallocenter assembly. Binds nickel. Probably functions as a nickel donor during metallocenter assembly. The chain is Urease accessory protein UreE from Burkholderia pseudomallei (strain K96243).